A 398-amino-acid chain; its full sequence is Putative F-box protein At4g17780 (398 aa).

Residues 8 to 55 (PSSIYIVADLLEDIFLRLPLKSILISKSVSKRWRSILESKTFVERRMS) form the F-box domain.

The chain is Putative F-box protein At4g17780 from Arabidopsis thaliana (Mouse-ear cress).